We begin with the raw amino-acid sequence, 318 residues long: Thymidylate synthase (318 aa).

DUMP contacts are provided by residues R26 and 181 to 182; that span reads RR. The Nucleophile role is filled by C201. Residues 221–224, N232, and 262–264 contribute to the dUMP site; these read RSAD and HIY. Residue D224 participates in (6R)-5,10-methylene-5,6,7,8-tetrahydrofolate binding. A (6R)-5,10-methylene-5,6,7,8-tetrahydrofolate-binding site is contributed by A317.

It belongs to the thymidylate synthase family. Bacterial-type ThyA subfamily. Homodimer.

The protein resides in the cytoplasm. The enzyme catalyses dUMP + (6R)-5,10-methylene-5,6,7,8-tetrahydrofolate = 7,8-dihydrofolate + dTMP. It participates in pyrimidine metabolism; dTTP biosynthesis. Functionally, catalyzes the reductive methylation of 2'-deoxyuridine-5'-monophosphate (dUMP) to 2'-deoxythymidine-5'-monophosphate (dTMP) while utilizing 5,10-methylenetetrahydrofolate (mTHF) as the methyl donor and reductant in the reaction, yielding dihydrofolate (DHF) as a by-product. This enzymatic reaction provides an intracellular de novo source of dTMP, an essential precursor for DNA biosynthesis. In Staphylococcus haemolyticus (strain JCSC1435), this protein is Thymidylate synthase.